Consider the following 113-residue polypeptide: uncharacterized protein (113 aa).

Transmembrane regions (helical) follow at residues Phe25 to Ile45 and Phe49 to Trp69.

It is found in the host membrane. This is an uncharacterized protein from Spiroplasma citri (SpV1).